The following is a 289-amino-acid chain: Extracellular ribonuclease (289 aa).

The N-terminal stretch at 1–24 (MTKKLWFLPIVCLFFILGWTAPSA) is a signal peptide. Residues 25 to 51 (SAGAPADTNLYSRLAVSTAGGTTLFPQ) constitute a propeptide that is removed on maturation. Residues 177–197 (FDNGGSEYPKAPGNYYDGDSW) form a disordered region.

It is found in the secreted. In terms of biological role, mg(2+)-activated ribonuclease which hydrolyzes RNA apparently nonspecifically into oligonucleotides with 5'-terminal phosphate. In Bacillus amyloliquefaciens (Bacillus velezensis), this protein is Extracellular ribonuclease (bsn).